The sequence spans 33 residues: MPVNGIFDVFDMLSIYIIYKLIVSNNTWLIMRK.

Residues 10 to 29 (FDMLSIYIIYKLIVSNNTWL) form a helical membrane-spanning segment.

The protein localises to the cell inner membrane. This Escherichia coli (strain K12) protein is Protein YtiC.